The primary structure comprises 235 residues: Protein MAINTENANCE OF PSII UNDER HIGH LIGHT 1 (235 aa).

Residues 127–147 (TAAIVAGIALIAVAAASSILL) form a helical membrane-spanning segment. A disordered region spans residues 181–235 (QPSTPSVTEAPPVAELETSLPETPSVAQQETSLPETMASEAQPEASSVPTTSSTS). 2 stretches are compositionally biased toward polar residues: residues 200–214 (LPET…TSLP) and 224–235 (EASSVPTTSSTS).

Interacts with psbA, psbB, psbC and psbD.

The protein resides in the plastid. The protein localises to the chloroplast thylakoid membrane. Interacts with photosystem II (PSII) core complexes and participates in the maintenance of normal PSII activity under photoinhibitory stress. May protect against photodamage or stabilize PSII under high-light stress. Participates in the maintainance of proper PSII function under high-light stress by protecting PSII from photooxidative damage. This chain is Protein MAINTENANCE OF PSII UNDER HIGH LIGHT 1, found in Arabidopsis thaliana (Mouse-ear cress).